The following is a 548-amino-acid chain: MDIRKRKNAGGDGDGGADGASVNVGDEPDSFGGRIGSPRRIFLFCLAFRVVNALLIQTYFNPDEHWQSLEVAHRTIFGYGYMTWEWKRGIRSYLHPMLFAFLYKLLQVTGLDTPYIMIKAPRLMQSIFSAIGDLYLYKLSDALYGGNVATWSLFCQMANWFIFFCLNRTFSNCLETVLTIMGLYYWPCIRDSSIDYPVNRKWGLVIAALACAIRPTSAVIWLYVGMLELFLTPNKVKFIILEVIPIGSLVLGFTCLLDRLMYGSWVIVPLNFLKFNFLSSGGDYYGTHPWHWYFTQGFLVMLFTFTPFSIAGIIKSKNQKLSALILWVLAIYSILGHKEFRFVLPVLPIALIFSGYAFAQMEVSGSSSSSSVTKKKQVPRQNHTKWSPKLRLSVYFLLATNIPMALYMSLFHQRGTEDAMNYLSDEAYKGRVKSILFLMPCHSTPYYSTLHRNIPMQFLDCTPSAEKGELDESDQFLVNPLGFASELARNWSEPPSHIVLFASEETKLRDFMIQHSFKEVRRFFHAHFKVDRDLQSSVVVYVVNHAFP.

The interval 1 to 23 (MDIRKRKNAGGDGDGGADGASVN) is disordered. The next 3 helical transmembrane spans lie at 41 to 61 (IFLF…TYFN), 98 to 118 (LFAF…YIMI), and 146 to 166 (GNVA…FFCL). N-linked (GlcNAc...) asparagine glycosylation is present at Asn-167. 7 helical membrane-spanning segments follow: residues 169-189 (TFSN…WPCI), 204-224 (LVIA…WLYV), 238-258 (FIIL…CLLD), 260-280 (LMYG…FLSS), 294-314 (FTQG…AGII), 320-340 (KLSA…HKEF), and 342-362 (FVLP…AQME). Asn-382 is a glycosylation site (N-linked (GlcNAc...) asparagine). Residues 392–412 (LSVYFLLATNIPMALYMSLFH) form a helical membrane-spanning segment. N-linked (GlcNAc...) asparagine glycosylation occurs at Asn-490.

The protein belongs to the glycosyltransferase 22 family. Mostly expressed, mainly in vascular tissues, in leaves, roots, stems, flowers, siliques and pollen, and, to a lower extent, in seedlings.

The protein localises to the endoplasmic reticulum membrane. In terms of biological role, mannosyltransferase involved in glycosylphosphatidylinositol-anchor biosynthesis. Required for the pollen tube micropylar guidance and embryo development by regulating GPI-anchor mediated protein localization (e.g. COBL10 and A36). The sequence is that of Mannosyltransferase APTG1 from Arabidopsis thaliana (Mouse-ear cress).